A 469-amino-acid polypeptide reads, in one-letter code: 3-isopropylmalate dehydratase large subunit (469 aa).

[4Fe-4S] cluster contacts are provided by cysteine 347, cysteine 407, and cysteine 410.

Belongs to the aconitase/IPM isomerase family. LeuC type 1 subfamily. In terms of assembly, heterodimer of LeuC and LeuD. The cofactor is [4Fe-4S] cluster.

The catalysed reaction is (2R,3S)-3-isopropylmalate = (2S)-2-isopropylmalate. Its pathway is amino-acid biosynthesis; L-leucine biosynthesis; L-leucine from 3-methyl-2-oxobutanoate: step 2/4. In terms of biological role, catalyzes the isomerization between 2-isopropylmalate and 3-isopropylmalate, via the formation of 2-isopropylmaleate. The protein is 3-isopropylmalate dehydratase large subunit of Sorangium cellulosum (strain So ce56) (Polyangium cellulosum (strain So ce56)).